Consider the following 205-residue polypeptide: Ribonuclease HII (205 aa).

One can recognise an RNase H type-2 domain in the interval E14–A205. Residues D20, E21, and D117 each coordinate a divalent metal cation.

This sequence belongs to the RNase HII family. Requires Mn(2+) as cofactor. The cofactor is Mg(2+).

Its subcellular location is the cytoplasm. It catalyses the reaction Endonucleolytic cleavage to 5'-phosphomonoester.. Functionally, endonuclease that specifically degrades the RNA of RNA-DNA hybrids. The polypeptide is Ribonuclease HII (Chlorobium phaeovibrioides (strain DSM 265 / 1930) (Prosthecochloris vibrioformis (strain DSM 265))).